The following is a 415-amino-acid chain: Squalene synthase 11 (415 aa).

2 consecutive transmembrane segments (helical) span residues 281-301 (AIFR…ALCF) and 392-412 (LIII…SNLP).

The protein belongs to the phytoene/squalene synthase family. It depends on Mg(2+) as a cofactor. Mn(2+) is required as a cofactor.

The protein localises to the endoplasmic reticulum membrane. The enzyme catalyses 2 (2E,6E)-farnesyl diphosphate + NADH + H(+) = squalene + 2 diphosphate + NAD(+). It carries out the reaction 2 (2E,6E)-farnesyl diphosphate + NADPH + H(+) = squalene + 2 diphosphate + NADP(+). Its pathway is terpene metabolism; lanosterol biosynthesis; lanosterol from farnesyl diphosphate: step 1/3. Functionally, component of the triterpene saponins (e.g. ginsenosides or panaxosides) and phytosterols biosynthetic pathways. Catalyzes the biosynthesis of squalene. The protein is Squalene synthase 11 of Panax ginseng (Korean ginseng).